The sequence spans 218 residues: Elongation factor Ts (218 aa).

The involved in Mg(2+) ion dislocation from EF-Tu stretch occupies residues 82 to 85 (TDFV).

Belongs to the EF-Ts family.

It is found in the cytoplasm. Its function is as follows. Associates with the EF-Tu.GDP complex and induces the exchange of GDP to GTP. It remains bound to the aminoacyl-tRNA.EF-Tu.GTP complex up to the GTP hydrolysis stage on the ribosome. The chain is Elongation factor Ts from Prochlorococcus marinus (strain MIT 9313).